Consider the following 199-residue polypeptide: Chaperone protein TorD (199 aa).

Belongs to the TorD/DmsD family. TorD subfamily.

It is found in the cytoplasm. Involved in the biogenesis of TorA. Acts on TorA before the insertion of the molybdenum cofactor and, as a result, probably favors a conformation of the apoenzyme that is competent for acquiring the cofactor. The polypeptide is Chaperone protein TorD (Actinobacillus pleuropneumoniae serotype 7 (strain AP76)).